The chain runs to 156 residues: 6,7-dimethyl-8-ribityllumazine synthase (156 aa).

5-amino-6-(D-ribitylamino)uracil contacts are provided by residues Phe-22, 57–59 (AYE), and 81–83 (TVI). 86–87 (GT) lines the (2S)-2-hydroxy-3-oxobutyl phosphate pocket. The active-site Proton donor is His-89. Phe-114 lines the 5-amino-6-(D-ribitylamino)uracil pocket. Residue Arg-128 participates in (2S)-2-hydroxy-3-oxobutyl phosphate binding.

The protein belongs to the DMRL synthase family. Forms an icosahedral capsid composed of 60 subunits, arranged as a dodecamer of pentamers.

It catalyses the reaction (2S)-2-hydroxy-3-oxobutyl phosphate + 5-amino-6-(D-ribitylamino)uracil = 6,7-dimethyl-8-(1-D-ribityl)lumazine + phosphate + 2 H2O + H(+). The protein operates within cofactor biosynthesis; riboflavin biosynthesis; riboflavin from 2-hydroxy-3-oxobutyl phosphate and 5-amino-6-(D-ribitylamino)uracil: step 1/2. Its function is as follows. Catalyzes the formation of 6,7-dimethyl-8-ribityllumazine by condensation of 5-amino-6-(D-ribitylamino)uracil with 3,4-dihydroxy-2-butanone 4-phosphate. This is the penultimate step in the biosynthesis of riboflavin. In Escherichia coli O45:K1 (strain S88 / ExPEC), this protein is 6,7-dimethyl-8-ribityllumazine synthase.